The following is a 193-amino-acid chain: Calcium-binding protein E63-1 (193 aa).

EF-hand domains follow at residues 35–70 (VEIK…LGIN), 71–106 (VSDE…IQAL), 127–162 (DVTE…IGEP), and 163–193 (LNEQ…RLLL). Ca(2+) contacts are provided by aspartate 48, asparagine 50, aspartate 52, arginine 54, and glutamate 59. Residues aspartate 140, aspartate 142, asparagine 144, glutamate 151, aspartate 176, aspartate 178, aspartate 180, arginine 182, and glutamate 187 each coordinate Ca(2+).

The sequence is that of Calcium-binding protein E63-1 (Eip63F-1) from Drosophila melanogaster (Fruit fly).